Consider the following 114-residue polypeptide: Small ribosomal subunit protein bS6 (114 aa).

The protein belongs to the bacterial ribosomal protein bS6 family.

Binds together with bS18 to 16S ribosomal RNA. The protein is Small ribosomal subunit protein bS6 of Phocaeicola vulgatus (strain ATCC 8482 / DSM 1447 / JCM 5826 / CCUG 4940 / NBRC 14291 / NCTC 11154) (Bacteroides vulgatus).